The sequence spans 34 residues: MSDIN-like toxin proprotein 4 (34 aa).

The propeptide occupies 1–10; it reads MSDINTARLP. A cross-link (cyclopeptide (Leu-Pro)) is located at residues 11-20; that stretch reads LFLPPVRMPP. The propeptide occupies 21–34; the sequence is CVGDDIEMVLTRGE.

Belongs to the MSDIN fungal toxin family. Post-translationally, processed by the macrocyclase-peptidase enzyme POPB to yield a toxic cyclic decapeptide. POPB first removes 10 residues from the N-terminus. Conformational trapping of the remaining peptide forces the enzyme to release this intermediate rather than proceed to macrocyclization. The enzyme rebinds the remaining peptide in a different conformation and catalyzes macrocyclization of the N-terminal 10 residues.

Functionally, probable toxin that belongs to the MSDIN-like toxin family responsible for a large number of food poisoning cases and deaths. This Amanita bisporigera (Destroying angel) protein is MSDIN-like toxin proprotein 4.